Here is a 298-residue protein sequence, read N- to C-terminus: ATP phosphoribosyltransferase (298 aa).

Belongs to the ATP phosphoribosyltransferase family. Long subfamily. Mg(2+) serves as cofactor.

Its subcellular location is the cytoplasm. The catalysed reaction is 1-(5-phospho-beta-D-ribosyl)-ATP + diphosphate = 5-phospho-alpha-D-ribose 1-diphosphate + ATP. The protein operates within amino-acid biosynthesis; L-histidine biosynthesis; L-histidine from 5-phospho-alpha-D-ribose 1-diphosphate: step 1/9. Feedback inhibited by histidine. Its function is as follows. Catalyzes the condensation of ATP and 5-phosphoribose 1-diphosphate to form N'-(5'-phosphoribosyl)-ATP (PR-ATP). Has a crucial role in the pathway because the rate of histidine biosynthesis seems to be controlled primarily by regulation of HisG enzymatic activity. This is ATP phosphoribosyltransferase from Aliivibrio salmonicida (strain LFI1238) (Vibrio salmonicida (strain LFI1238)).